A 304-amino-acid chain; its full sequence is Acetaldehyde dehydrogenase (304 aa).

Cys131 serves as the catalytic Acyl-thioester intermediate. Residues 162–170 (SAGPGTRKN) and Asn273 each bind NAD(+).

The protein belongs to the acetaldehyde dehydrogenase family.

It catalyses the reaction acetaldehyde + NAD(+) + CoA = acetyl-CoA + NADH + H(+). This chain is Acetaldehyde dehydrogenase, found in Polaromonas naphthalenivorans (strain CJ2).